The following is a 592-amino-acid chain: Probable auxin efflux carrier component 1c (592 aa).

The Extracellular portion of the chain corresponds to 1–6; that stretch reads MITGAD. Residues 7–27 traverse the membrane as a helical segment; sequence FYHVMTAMVPLYVAMILAYGS. The Cytoplasmic portion of the chain corresponds to 28 to 38; sequence VKWWRIFTPDQ. The helical transmembrane segment at 39–59 threads the bilayer; sequence CSGINRFVALFAVPLLSFHFI. A (indol-3-yl)acetate-binding site is contributed by valine 51. Topologically, residues 60-70 are extracellular; that stretch reads STNNPYTMNLR. Residues 71 to 91 form a helical membrane-spanning segment; it reads FIAADTLQKLIVLALLTLWSH. The Cytoplasmic portion of the chain corresponds to 92–100; that stretch reads LSRRGSLEW. Residues 101–121 traverse the membrane as a helical segment; sequence TITLFSLSTLPNTLVMGIPLL. Residues asparagine 112 and leucine 114 each coordinate (indol-3-yl)acetate. Residues 122–131 are Extracellular-facing; the sequence is KGMYGEFSGS. Residues 132 to 152 form a helical membrane-spanning segment; sequence LMVQIVVLQCIIWYTLMLFMF. Tyrosine 145 contacts (indol-3-yl)acetate. The Cytoplasmic segment spans residues 153-452; that stretch reads EYRGARILIT…LIRNPNTYSS (300 aa). Disordered stretches follow at residues 214-236 and 282-331; these read RSDV…SNLT and GATP…AKGE. The segment covering 224 to 236 has biased composition (polar residues); sequence GFSSTTPRPSNLT. Positions 309-318 are enriched in pro residues; sequence APNPAMAAPP. A helical transmembrane segment spans residues 453 to 473; that stretch reads LIGLIWSLVCFRWNFEMPAII. Residues 474–476 are Extracellular-facing; sequence LKS. Residues 477-497 traverse the membrane as a helical segment; sequence ISILSDAGLGMAMFSLGLFMA. Residues 498 to 511 are Cytoplasmic-facing; it reads LQPRIIACGNKVAT. Residues 512–532 traverse the membrane as a helical segment; that stretch reads FAMAVRFLTGPAVMAAASIAV. At 533-537 the chain is on the extracellular side; the sequence is GLRGT. The chain crosses the membrane as a helical span at residues 538 to 558; the sequence is LLHVAIVQAALPQGIVPFVFA. (indol-3-yl)acetate is bound by residues isoleucine 552 and valine 553. At 559–571 the chain is on the cytoplasmic side; it reads KEYSVHPDILSTA. A helical transmembrane segment spans residues 572–592; it reads VIFGMLIALPITLVYYILLGL.

Belongs to the auxin efflux carrier (TC 2.A.69.1) family. In terms of assembly, homodimer. In terms of tissue distribution, expressed at low levels in roots and leaves. Expressed in roots, stem bases, stems, leaves and young panicles.

Its subcellular location is the membrane. In terms of biological role, may act as a component of the auxin efflux carrier. This Oryza sativa subsp. japonica (Rice) protein is Probable auxin efflux carrier component 1c.